The following is a 552-amino-acid chain: Protein FAM234A (552 aa).

Residues 1-22 are compositionally biased toward basic and acidic residues; that stretch reads MLDHKDLEAEIHPLKNEERKSQ. Positions 1 to 40 are disordered; that stretch reads MLDHKDLEAEIHPLKNEERKSQENLGNPSKNEDNVKSAPP. Residues 1–49 lie on the Cytoplasmic side of the membrane; the sequence is MLDHKDLEAEIHPLKNEERKSQENLGNPSKNEDNVKSAPPQSRLSRCRA. Ser21 carries the post-translational modification Phosphoserine. Residues 50–70 traverse the membrane as a helical; Signal-anchor for type II membrane protein segment; sequence AAFFLSLFLCLFVVFVVSFVI. Over 71–552 the chain is Extracellular; sequence PCPDRPASQR…FSRLRYQSEA (482 aa). 4 N-linked (GlcNAc...) asparagine glycosylation sites follow: Asn116, Asn314, Asn389, and Asn473.

It belongs to the FAM234 family.

The protein resides in the membrane. The chain is Protein FAM234A from Homo sapiens (Human).